Here is a 526-residue protein sequence, read N- to C-terminus: 1,4-beta-D-glucan cellobiohydrolase B (526 aa).

The signal sequence occupies residues 1–23 (MASSFQLYKALLFFSSLLSAVQA). Residues 24 to 458 (QKVGTQQAEV…SNIKFGPIGS (435 aa)) form a catalytic region. The Nucleophile role is filled by Glu-235. The active-site Proton donor is Glu-240. N-linked (GlcNAc...) asparagine glycosylation is found at Asn-293 and Asn-400. The interval 459–490 (TFGNGGGSGPTTTVTTSTATSTTSSATSTATG) is ser/Thr-rich linker. The interval 464 to 488 (GGSGPTTTVTTSTATSTTSSATSTA) is disordered. Residues 468–488 (PTTTVTTSTATSTTSSATSTA) are compositionally biased toward low complexity. Positions 490-526 (GQAQHWEQCGGNGWTGPTVCASPWACTVVNSWYSQCL) constitute a CBM1 domain. Cystine bridges form between Cys-498-Cys-515 and Cys-509-Cys-525.

This sequence belongs to the glycosyl hydrolase 7 (cellulase C) family.

The protein resides in the secreted. The catalysed reaction is Hydrolysis of (1-&gt;4)-beta-D-glucosidic linkages in cellulose and cellotetraose, releasing cellobiose from the non-reducing ends of the chains.. Functionally, the biological conversion of cellulose to glucose generally requires three types of hydrolytic enzymes: (1) Endoglucanases which cut internal beta-1,4-glucosidic bonds; (2) Exocellobiohydrolases that cut the disaccharide cellobiose from the non-reducing end of the cellulose polymer chain; (3) Beta-1,4-glucosidases which hydrolyze the cellobiose and other short cello-oligosaccharides to glucose. The protein is 1,4-beta-D-glucan cellobiohydrolase B (cbhB) of Emericella nidulans (strain FGSC A4 / ATCC 38163 / CBS 112.46 / NRRL 194 / M139) (Aspergillus nidulans).